Reading from the N-terminus, the 363-residue chain is UDP-N-acetylglucosamine--N-acetylmuramyl-(pentapeptide) pyrophosphoryl-undecaprenol N-acetylglucosamine transferase (363 aa).

Residues 10-12 (TGG), N124, S195, and Q295 contribute to the UDP-N-acetyl-alpha-D-glucosamine site.

The protein belongs to the glycosyltransferase 28 family. MurG subfamily.

The protein resides in the cell membrane. It carries out the reaction di-trans,octa-cis-undecaprenyl diphospho-N-acetyl-alpha-D-muramoyl-L-alanyl-D-glutamyl-meso-2,6-diaminopimeloyl-D-alanyl-D-alanine + UDP-N-acetyl-alpha-D-glucosamine = di-trans,octa-cis-undecaprenyl diphospho-[N-acetyl-alpha-D-glucosaminyl-(1-&gt;4)]-N-acetyl-alpha-D-muramoyl-L-alanyl-D-glutamyl-meso-2,6-diaminopimeloyl-D-alanyl-D-alanine + UDP + H(+). It participates in cell wall biogenesis; peptidoglycan biosynthesis. Its function is as follows. Cell wall formation. Catalyzes the transfer of a GlcNAc subunit on undecaprenyl-pyrophosphoryl-MurNAc-pentapeptide (lipid intermediate I) to form undecaprenyl-pyrophosphoryl-MurNAc-(pentapeptide)GlcNAc (lipid intermediate II). The chain is UDP-N-acetylglucosamine--N-acetylmuramyl-(pentapeptide) pyrophosphoryl-undecaprenol N-acetylglucosamine transferase from Bacillus subtilis (strain 168).